Reading from the N-terminus, the 109-residue chain is Ribonuclease P protein component (109 aa).

This sequence belongs to the RnpA family. Consists of a catalytic RNA component (M1 or rnpB) and a protein subunit.

It carries out the reaction Endonucleolytic cleavage of RNA, removing 5'-extranucleotides from tRNA precursor.. Functionally, RNaseP catalyzes the removal of the 5'-leader sequence from pre-tRNA to produce the mature 5'-terminus. It can also cleave other RNA substrates such as 4.5S RNA. The protein component plays an auxiliary but essential role in vivo by binding to the 5'-leader sequence and broadening the substrate specificity of the ribozyme. This chain is Ribonuclease P protein component, found in Streptococcus agalactiae serotype Ia (strain ATCC 27591 / A909 / CDC SS700).